The sequence spans 579 residues: MLRTHTCGELRATDEGKKVKLCGWVDRIRDLGGVRFIDLRDRYGETQIVCDVNSEAYSVVDELTRESVVLVEGTVRKRPEGTENPNIETGEIEVVAERIEILSLADPLPFYPGETPKEEMRLKYRYIDLRSERMKRNIILRYRISKIIRDYFDELGFLEIETPFLTRSTPEGARDFLVPSRLRPGKFYALPQSPQLFKQILMISGFDRYFQIVRCFRDEDLRADRQPEFTQVDVEMSFVDVEDVLNVSEGMVSRVFKESSGIDLKVPFDRIPYDDAMEKYGTDKPDRRYGMELRDFGYAFETTEFKVIRNVLNEGGSVKGFIVPGFASEMSRKKGEELMARMKELGLGGLIWFKLDGGITSPHLKHLEKEFRKIAETENMNEGDVCLIAAHTDRNLLNEALGTLRLEIGKEHFSHLAKGFDVLWVVDFPYFEWSEEEERFVARHHPFTMPVLETLGDDYTKVRAKAYDLVINGYEVGGGSIRIHRRDIQEKIFELLGLSEEEAQKKFGFFLEAFRYGVPPHGGIAFGLDRLVSIIAGESSIREVIAFPKTGNGVCLLTGAPAEVDERQLRELRIRIEEG.

Glu-171 is a binding site for L-aspartate. Residues 195–198 (QLFK) are aspartate. An L-aspartate-binding site is contributed by Arg-217. ATP contacts are provided by residues 217-219 (RDE) and Gln-226. An L-aspartate-binding site is contributed by His-444. Glu-475 contributes to the ATP binding site. Arg-482 contributes to the L-aspartate binding site. An ATP-binding site is contributed by 527–530 (GLDR).

Belongs to the class-II aminoacyl-tRNA synthetase family. Type 1 subfamily. As to quaternary structure, homodimer.

The protein resides in the cytoplasm. It carries out the reaction tRNA(Asx) + L-aspartate + ATP = L-aspartyl-tRNA(Asx) + AMP + diphosphate. Its function is as follows. Aspartyl-tRNA synthetase with relaxed tRNA specificity since it is able to aspartylate not only its cognate tRNA(Asp) but also tRNA(Asn). Reaction proceeds in two steps: L-aspartate is first activated by ATP to form Asp-AMP and then transferred to the acceptor end of tRNA(Asp/Asn). This Thermotoga maritima (strain ATCC 43589 / DSM 3109 / JCM 10099 / NBRC 100826 / MSB8) protein is Aspartate--tRNA(Asp/Asn) ligase.